A 395-amino-acid polypeptide reads, in one-letter code: Elongation factor Tu (395 aa).

The 195-residue stretch at 10-204 (KPHLNIGTIG…AVDNWIEEPV (195 aa)) folds into the tr-type G domain. Residues 19-26 (GHVDHGKT) are G1. 19 to 26 (GHVDHGKT) is a binding site for GTP. Threonine 26 serves as a coordination point for Mg(2+). The tract at residues 60–64 (GITIN) is G2. The segment at 81 to 84 (DCPG) is G3. Residues 81–85 (DCPGH) and 136–139 (NKVD) contribute to the GTP site. Residues 136 to 139 (NKVD) form a G4 region. A G5 region spans residues 174–176 (SAL).

Belongs to the TRAFAC class translation factor GTPase superfamily. Classic translation factor GTPase family. EF-Tu/EF-1A subfamily. In terms of assembly, monomer.

It localises to the cytoplasm. It carries out the reaction GTP + H2O = GDP + phosphate + H(+). In terms of biological role, GTP hydrolase that promotes the GTP-dependent binding of aminoacyl-tRNA to the A-site of ribosomes during protein biosynthesis. This is Elongation factor Tu from Flavobacterium johnsoniae (strain ATCC 17061 / DSM 2064 / JCM 8514 / BCRC 14874 / CCUG 350202 / NBRC 14942 / NCIMB 11054 / UW101) (Cytophaga johnsonae).